Here is a 50-residue protein sequence, read N- to C-terminus: Putative protein HokG (50 aa).

Residues 5–25 (YALVAIIVLCCTVLGFTLMVG) traverse the membrane as a helical segment.

It belongs to the Hok/Gef family.

Its subcellular location is the cell inner membrane. In terms of biological role, toxic component of a type I toxin-antitoxin (TA) system. When overexpressed kills cells within minutes; causes collapse of the transmembrane potential and arrest of respiration. Its toxic effect is probably neutralized by an antisense antitoxin Sok RNA. The polypeptide is Putative protein HokG (hokG) (Escherichia coli O157:H7).